A 357-amino-acid chain; its full sequence is DNA replication and repair protein RecF (357 aa).

31–38 (GQNGAGKT) is an ATP binding site.

The protein belongs to the RecF family.

The protein localises to the cytoplasm. Its function is as follows. The RecF protein is involved in DNA metabolism; it is required for DNA replication and normal SOS inducibility. RecF binds preferentially to single-stranded, linear DNA. It also seems to bind ATP. The protein is DNA replication and repair protein RecF of Coxiella burnetii (strain Dugway 5J108-111).